A 214-amino-acid chain; its full sequence is MTLILNPESARVLGCLIEKEITTPEYYPLSLNALINACNQKSNRDPAMSLDEDSVRVALRNLTDKGLARHAPSEGRVPKYEHDVNNAMQLSRREVAILCELLLRGPQTPGELRGRAERMYKFEGIEDVHSTLQRLMERDPALVVVLPRQPGTKEARYTHTLMPVDMQPQPAVEVSHSVSGGNDGRIAQLEAEVRELRAEIETLKEQVKSLTPVN.

This sequence belongs to the UPF0502 family.

In Koribacter versatilis (strain Ellin345), this protein is UPF0502 protein Acid345_3645.